The sequence spans 579 residues: Cytochrome P450 monooxygenase ORF6 (579 aa).

Residue N2 is glycosylated (N-linked (GlcNAc...) asparagine). Residues 7 to 29 traverse the membrane as a helical segment; it reads PLGSFVGTTLLLFILYKLVKLAY. N-linked (GlcNAc...) asparagine glycosylation is found at N194 and N390. C512 is a heme binding site.

The protein belongs to the cytochrome P450 family. The cofactor is heme.

It is found in the membrane. It functions in the pathway sesquiterpene biosynthesis. Cytochrome P450 monooxygenase; part of the gene cluster that mediates the biosynthesis of PR-toxin, a bicyclic sesquiterpene belonging to the eremophilane class and acting as a mycotoxin. The first step of the pathway is catalyzed by the aristolochene synthase which performs the cyclization of trans,trans-farnesyl diphosphate (FPP) to the bicyclic sesquiterpene aristolochene. Following the formation of aristolochene, the non-oxygenated aristolochene is converted to the trioxygenated intermediate eremofortin B, via 7-epi-neopetasone. This conversion appears to involve three enzymes, a hydroxysterol oxidase-like enzyme, the quinone-oxidase prx3 that forms the quinone-type-structure in the bicyclic nucleus of aristolochene with the C8-oxo group and the C-3 hydroxyl group, and the P450 monooxygenase ORF6 that introduces the epoxide at the double bond between carbons 1 and 2. No monoxy or dioxy-intermediates have been reported to be released to the broth, so these three early oxidative reactions may be coupled together. Eremofortin B is further oxidized by another P450 monooxygenase, that introduces a second epoxide between carbons 7 and 11 prior to acetylation to eremofortin A by the acetyltransferase ORF8. The second epoxidation may be performed by a second P450 monooxygenase. After the acetylation step, eremofortin A is converted to eremofortin C and then to PR-toxin. First the conversion of eremofortin A to eremofortin C proceeds by oxidation of the side chain of the molecule at C-12 and is catalyzed by the short-chain oxidoreductase prx1. The cytochrome P450 monooxygenase ORF6 is probably also involved in this step. The primary alcohol formed at C-12 is finally oxidized by the short-chain alcohol dehydrogenase prx4 that forms PR-toxin. The protein is Cytochrome P450 monooxygenase ORF6 of Penicillium roqueforti (strain FM164).